The chain runs to 281 residues: Leukocyte antigen CD37 (281 aa).

The Cytoplasmic portion of the chain corresponds to 1 to 17; sequence MSAQESCLSLIKYFLFV. A helical membrane pass occupies residues 18-38; sequence FNLFFFVLGGLIFCFGTWILI. The Extracellular portion of the chain corresponds to 39-59; it reads DKTSFVSFVGLSFVPLQTWSK. The helical transmembrane segment at 60 to 74 threads the bilayer; sequence VLAVSGVLTMALALL. Residues 75–85 lie on the Cytoplasmic side of the membrane; that stretch reads GCVGALKELRC. A helical membrane pass occupies residues 86–111; sequence LLGLYFGMLLLLFATQITLGILISTQ. Residues 112-241 are Extracellular-facing; that stretch reads RVRLERRVQE…QSLQKWLHNN (130 aa). 3 N-linked (GlcNAc...) asparagine glycosylation sites follow: N170, N183, and N188. The helical transmembrane segment at 242–266 threads the bilayer; it reads IISIVGICLGVGLLELGFMTLSIFL. Topologically, residues 267 to 281 are cytoplasmic; the sequence is CRNLDHVYDRLARYR.

This sequence belongs to the tetraspanin (TM4SF) family. Interacts with SCIMP. Interacts with SOCS3. Interacts with DECTIN1/CLEC7A. Post-translationally, tyrosine phosphorylated; leading to activation of downstream signaling pathways.

The protein localises to the cell membrane. Structural component of specialized membrane microdomains known as tetraspanin-enriched microdomains (TERMs), which act as platforms for receptor clustering and signaling. Participates thereby in diverse biological functions such as cell signal transduction, adhesion, migration and protein trafficking. Upon ligand binding, two signaling pathways are activated, one acting through phosphorylation by LYN leading to cell death or a survival pathway with activation of GSK3B. Plays an essential role for clustering of integrin ITGA4/ITGB1 and promotes its mobility in the plasma membrane of B-cells. In turn, participates in ITGA4/ITGB1 integrin-mediated antiapoptotic signaling through AKT. Also plays a role in the migration of dendritic cells and neutrophils to draining lymph nodes, as well as in their integrin-mediated adhesion. Negatively regulates IL-6 responses through direct interaction with SOCS3 thereby preventing constitutive IL-6 signaling. Alternatively, inhibition of IL-6 signaling can also occur via interaction and stabilization of DECTIN1/CLEC7A at the cell membrane to inhibit its ability to promote the production of IL-6. This chain is Leukocyte antigen CD37 (Cd37), found in Mus musculus (Mouse).